We begin with the raw amino-acid sequence, 87 residues long: MAIKMRLQRFGVHKRPFYRVVASESKNARDGKFLEILGTYDTILDIVELDHNKAQKWLSNGAQPTKTVKKVFKKSKFVAKNKTKFEK.

The protein belongs to the bacterial ribosomal protein bS16 family.

This is Small ribosomal subunit protein bS16 from Aster yellows witches'-broom phytoplasma (strain AYWB).